Reading from the N-terminus, the 631-residue chain is RING finger protein 112 (631 aa).

An RING-type zinc finger spans residues 57–98 (CSICLERLREPISLDCGHDFCIRCFSTHRIPGCELPCCPECR). Residues 131–631 (AVRAERLLLV…GDREPLLQEE (501 aa)) are interaction with ZBTB16. Residues 166 to 397 (DTPVCLLAVL…YISDVLSTAP (232 aa)) form the GB1/RHD3-type G domain. 317–318 (RD) is a binding site for GTP. The next 2 helical transmembrane spans lie at 547-567 (LAAVGGAVGAGLMGLAGGVVG) and 580-600 (GMVAAGAAVGATGAAVVGGGV).

It belongs to the TRAFAC class dynamin-like GTPase superfamily. GB1/RHD3 GTPase family. GB1 subfamily. As to quaternary structure, self-associates. Interacts with SP1 in an oxidative stress-regulated manner. Interacts with SIGMAR1 in an oxidative stress-regulated manner. Interacts with ZBTB16 (via C2H2-type zinc finger domains 1 and 2). Auto-ubiquitinated. As to expression, predominantly expressed in brain.

The protein resides in the membrane. It is found in the cytoplasm. It localises to the nucleus. The protein localises to the nuclear body. Its subcellular location is the nucleoplasm. The protein resides in the endosome. It is found in the cytoplasmic vesicle. It localises to the secretory vesicle. The protein localises to the synaptic vesicle. Its subcellular location is the postsynaptic density. The protein resides in the perikaryon. It is found in the cell projection. It localises to the neuron projection. It carries out the reaction S-ubiquitinyl-[E2 ubiquitin-conjugating enzyme]-L-cysteine + [acceptor protein]-L-lysine = [E2 ubiquitin-conjugating enzyme]-L-cysteine + N(6)-ubiquitinyl-[acceptor protein]-L-lysine.. Its pathway is protein modification; protein ubiquitination. E3 ubiquitin-protein ligase that plays an important role in neuronal differentiation, including neurogenesis and gliogenesis, during brain development. During embryonic development initiates neuronal differentiation by inducing cell cycle arrest at the G0/G1 phase through up-regulation of cell-cycle regulatory proteins. Plays a role not only in the fetal period during the development of the nervous system, but also in the adult brain, where it is involved in the maintenance of neural functions and protection of the nervous tissue cells from oxidative stress-induced damage. Exhibits GTPase and E3 ubiquitin-protein ligase activities. Regulates dendritic spine density and synaptic neurotransmission; its ability to hydrolyze GTP is involved in the maintenance of dendritic spine density. In Rattus norvegicus (Rat), this protein is RING finger protein 112 (Rnf112).